Consider the following 325-residue polypeptide: GMP reductase (325 aa).

The active-site Thioimidate intermediate is Cys174. 203 to 226 (LIADGGIRTHGDIAKSIRFGASMV) provides a ligand contact to NADP(+).

Belongs to the IMPDH/GMPR family. GuaC type 2 subfamily.

It catalyses the reaction IMP + NH4(+) + NADP(+) = GMP + NADPH + 2 H(+). Catalyzes the irreversible NADPH-dependent deamination of GMP to IMP. It functions in the conversion of nucleobase, nucleoside and nucleotide derivatives of G to A nucleotides, and in maintaining the intracellular balance of A and G nucleotides. In Staphylococcus aureus (strain NCTC 8325 / PS 47), this protein is GMP reductase.